Here is a 311-residue protein sequence, read N- to C-terminus: MRLTQAPPSRRTLMTLGAGATMAALLPAGGAAYASTSTAKAPAAEGISGRLRALEKQYAARLGVFALDTGTGAGRSYRAGERFPMCSVFKALAAAAVLRDVDARREFLTKRIHYTEKFVKDAGYIPVTGKPENIAGGMTGAELCAAAVSESDNGAGNLLLRELDGPTGITRFCRSLGDTTTRLDRWEPALNSAEPDRVTDTTSPGAIGRTFGRLIVGSALRAGDRKRLTGWLVANTTNRPTFRAGLPDDWVLADKTGGGEQYGVANDVGVVQPPGRAPLVLSVLSTKFDPKGPTDNPLVAKAAALVAGELT.

The segment at residues 1 to 34 (MRLTQAPPSRRTLMTLGAGATMAALLPAGGAAYA) is a signal peptide (tat-type signal). Ser-87 acts as the Acyl-ester intermediate in catalysis. 255-257 (KTG) provides a ligand contact to substrate.

Belongs to the class-A beta-lactamase family. Predicted to be exported by the Tat system. The position of the signal peptide cleavage has not been experimentally proven.

It catalyses the reaction a beta-lactam + H2O = a substituted beta-amino acid. The chain is Beta-lactamase (bla) from Kitasatospora aureofaciens (Streptomyces aureofaciens).